Here is a 636-residue protein sequence, read N- to C-terminus: 1-deoxy-D-xylulose-5-phosphate synthase (636 aa).

Thiamine diphosphate is bound by residues His73 and 114 to 116 (SHA). Residue Asp146 coordinates Mg(2+). Residues 147 to 148 (GA), Asn176, Tyr287, and Glu368 each bind thiamine diphosphate. Asn176 serves as a coordination point for Mg(2+).

It belongs to the transketolase family. DXPS subfamily. As to quaternary structure, homodimer. Mg(2+) serves as cofactor. The cofactor is thiamine diphosphate.

The enzyme catalyses D-glyceraldehyde 3-phosphate + pyruvate + H(+) = 1-deoxy-D-xylulose 5-phosphate + CO2. Its pathway is metabolic intermediate biosynthesis; 1-deoxy-D-xylulose 5-phosphate biosynthesis; 1-deoxy-D-xylulose 5-phosphate from D-glyceraldehyde 3-phosphate and pyruvate: step 1/1. Catalyzes the acyloin condensation reaction between C atoms 2 and 3 of pyruvate and glyceraldehyde 3-phosphate to yield 1-deoxy-D-xylulose-5-phosphate (DXP). This is 1-deoxy-D-xylulose-5-phosphate synthase from Corynebacterium glutamicum (strain ATCC 13032 / DSM 20300 / JCM 1318 / BCRC 11384 / CCUG 27702 / LMG 3730 / NBRC 12168 / NCIMB 10025 / NRRL B-2784 / 534).